We begin with the raw amino-acid sequence, 333 residues long: tRNA N6-adenosine threonylcarbamoyltransferase (333 aa).

Positions 111 and 115 each coordinate Fe cation. Residues 134–138 (LASGG), D167, G180, and N273 each bind substrate. D301 is a binding site for Fe cation.

It belongs to the KAE1 / TsaD family. Fe(2+) is required as a cofactor.

The protein localises to the cytoplasm. It catalyses the reaction L-threonylcarbamoyladenylate + adenosine(37) in tRNA = N(6)-L-threonylcarbamoyladenosine(37) in tRNA + AMP + H(+). Functionally, required for the formation of a threonylcarbamoyl group on adenosine at position 37 (t(6)A37) in tRNAs that read codons beginning with adenine. Is involved in the transfer of the threonylcarbamoyl moiety of threonylcarbamoyl-AMP (TC-AMP) to the N6 group of A37, together with TsaE and TsaB. TsaD likely plays a direct catalytic role in this reaction. This chain is tRNA N6-adenosine threonylcarbamoyltransferase, found in Desulforapulum autotrophicum (strain ATCC 43914 / DSM 3382 / VKM B-1955 / HRM2) (Desulfobacterium autotrophicum).